A 496-amino-acid polypeptide reads, in one-letter code: 3-octaprenyl-4-hydroxybenzoate carboxy-lyase (496 aa).

Residue N181 participates in Mn(2+) binding. Prenylated FMN is bound by residues 184 to 186, 198 to 200, and 203 to 204; these read IYR, RWL, and RG. E247 contributes to the Mn(2+) binding site. D296 (proton donor) is an active-site residue.

Belongs to the UbiD family. Homohexamer. Prenylated FMN is required as a cofactor. The cofactor is Mn(2+).

The protein localises to the cell membrane. The catalysed reaction is a 4-hydroxy-3-(all-trans-polyprenyl)benzoate + H(+) = a 2-(all-trans-polyprenyl)phenol + CO2. The protein operates within cofactor biosynthesis; ubiquinone biosynthesis. Functionally, catalyzes the decarboxylation of 3-octaprenyl-4-hydroxy benzoate to 2-octaprenylphenol, an intermediate step in ubiquinone biosynthesis. The sequence is that of 3-octaprenyl-4-hydroxybenzoate carboxy-lyase from Aromatoleum aromaticum (strain DSM 19018 / LMG 30748 / EbN1) (Azoarcus sp. (strain EbN1)).